The following is an 824-amino-acid chain: Acyl-homoserine lactone acylase QuiP (824 aa).

The first 26 residues, 1 to 26 (MASPALRHFLPRFGAAAAAASFLSLA), serve as a signal peptide directing secretion. The Nucleophile role is filled by S264.

This sequence belongs to the peptidase S45 family. As to quaternary structure, heterodimer of an alpha subunit and a beta subunit processed from the same precursor.

The protein localises to the periplasm. The catalysed reaction is an N-acyl-L-homoserine lactone + H2O = L-homoserine lactone + a carboxylate. Catalyzes the deacylation of acyl-homoserine lactone (AHL or acyl-HSL), releasing homoserine lactone (HSL) and the corresponding fatty acid. Possesses a specificity for the degradation of long-chain acyl-HSLs (side chains of seven or more carbons in length). The chain is Acyl-homoserine lactone acylase QuiP (quiP) from Pseudomonas syringae pv. tomato (strain ATCC BAA-871 / DC3000).